The chain runs to 341 residues: MQSITVALDAMGGDFGPRVTVPAAVQALSHFPELKVILIGDQSLITSQLSQLGTSTSSRLSILHSEKVISNSEKPSLALRNSQNSSMRMAIDLVSDNEADACVSGGNTGALMALSRFVLKLLPGIERPALVSALPTISGKRTWMLDLGANVSCDADSLFQFAVMGSALAEEHLGRPPRVAVLNIGAEEIKGNDLVKRCAEMLSQTDAINFVGYIEGNQILHDVADVIVCDGFVGNVCLKASEGTAQLFIEKLKTSMMASTIKGWIARKLFSRLFNELKTLNPDQYNGASLLGLRGIVIKSHGSADVSAIVNALGEAVHEVKRQVPSRISDRLEAVLLERHY.

It belongs to the PlsX family. As to quaternary structure, homodimer. Probably interacts with PlsY.

It localises to the cytoplasm. The catalysed reaction is a fatty acyl-[ACP] + phosphate = an acyl phosphate + holo-[ACP]. The protein operates within lipid metabolism; phospholipid metabolism. Its function is as follows. Catalyzes the reversible formation of acyl-phosphate (acyl-PO(4)) from acyl-[acyl-carrier-protein] (acyl-ACP). This enzyme utilizes acyl-ACP as fatty acyl donor, but not acyl-CoA. This chain is Phosphate acyltransferase, found in Vibrio campbellii (strain ATCC BAA-1116).